Reading from the N-terminus, the 122-residue chain is Small ribosomal subunit protein uS13 (122 aa).

Residues 97 to 122 (PVRGQRTHTNAKTRKGRSRLPIAGKK) form a disordered region.

This sequence belongs to the universal ribosomal protein uS13 family. Part of the 30S ribosomal subunit. Forms a loose heterodimer with protein S19. Forms two bridges to the 50S subunit in the 70S ribosome.

Its function is as follows. Located at the top of the head of the 30S subunit, it contacts several helices of the 16S rRNA. In the 70S ribosome it contacts the 23S rRNA (bridge B1a) and protein L5 of the 50S subunit (bridge B1b), connecting the 2 subunits; these bridges are implicated in subunit movement. Contacts the tRNAs in the A and P-sites. The polypeptide is Small ribosomal subunit protein uS13 (Wolbachia pipientis wMel).